A 389-amino-acid polypeptide reads, in one-letter code: Phosphoglycerate kinase (389 aa).

Residues 19-21, Arg34, 57-60, Arg117, and Arg150 contribute to the substrate site; these read DYN and HLGR. ATP-binding positions include Lys200, Gly288, Glu319, and 347–350; that span reads GGDS.

Belongs to the phosphoglycerate kinase family. In terms of assembly, monomer.

The protein resides in the cytoplasm. It carries out the reaction (2R)-3-phosphoglycerate + ATP = (2R)-3-phospho-glyceroyl phosphate + ADP. It functions in the pathway carbohydrate degradation; glycolysis; pyruvate from D-glyceraldehyde 3-phosphate: step 2/5. The chain is Phosphoglycerate kinase from Deinococcus geothermalis (strain DSM 11300 / CIP 105573 / AG-3a).